Reading from the N-terminus, the 154-residue chain is Low molecular weight protein-tyrosine-phosphatase PtpA (154 aa).

The active-site Nucleophile is the Cys-8. The active site involves Arg-14. The Proton donor role is filled by Asp-120.

It belongs to the low molecular weight phosphotyrosine protein phosphatase family. As to quaternary structure, interacts with host CORO1A. Post-translationally, phosphorylations at Tyr-122 and Tyr-123 are essential for phosphatase activity.

It is found in the secreted. The enzyme catalyses O-phospho-L-tyrosyl-[protein] + H2O = L-tyrosyl-[protein] + phosphate. Its function is as follows. Secreted tyrosine phosphatase that plays a critical role during infection as a bacterial effector protein that counteracts host defenses. Required for intramacrophage survival. This chain is Low molecular weight protein-tyrosine-phosphatase PtpA (ptpA), found in Staphylococcus aureus (strain MSSA476).